Consider the following 3432-residue polypeptide: Hybrid signal transduction histidine kinase G (3432 aa).

Composition is skewed to low complexity over residues 44–68 (HFSNSVLNQTTTTTTTTTTTTTTTN), 76–90 (SQLQAQLQSQSQQNN), and 126–145 (QPQQQQQQQASNKSKLSQKQ). Disordered regions lie at residues 44-109 (HFSN…TNSS) and 124-240 (DDQP…HNIN). Positions 146–157 (TSQLNISGNNSG) are enriched in polar residues. Low complexity-rich tracts occupy residues 165–177 (TISNSNNSINFIH) and 187–238 (KTPI…NNHN). In terms of domain architecture, Protein kinase spans 263-792 (LSFKHGYNSG…YGLKKDLEMF (530 aa)). Residues 269–277 (YNSGLGGNF) and K305 contribute to the ATP site. A compositionally biased stretch (low complexity) spans 399–419 (NNNNNNNNSYNNNYNNNNNNN). 2 disordered regions span residues 399-426 (NNNNNNNNSYNNNYNNNNNNNGQVTSPI) and 443-542 (FQLN…STPL). Residues 443-467 (FQLNSSTNSTGSPLIITSQPMPFQL) are compositionally biased toward polar residues. Residues 468 to 479 (NSNSNTTASSSS) are compositionally biased toward low complexity. The span at 480–490 (PITHSNLNTAI) shows a compositional bias: polar residues. Residues 491–508 (TSTTTSNSNSNNNSNNNN) are compositionally biased toward low complexity. The span at 509–525 (SGGGGGGGGGGGGGGGT) shows a compositional bias: gly residues. The active-site Proton acceptor; for protein kinase activity is the D585. The interval 863-1121 (GKEFIIVSGL…TMKIVLKNLD (259 aa)) is AAA. Residue 871–878 (GLSGVGKT) participates in ATP binding. 2 disordered regions span residues 1040 to 1077 (NNFSINNNNNNNNGCNNNNNNNNNNINNNNNNNNNNNI) and 1261 to 1290 (TTTTNNNTTNNTNNNNTNNNNNNTNGNNSD). Low complexity predominate over residues 1261-1288 (TTTTNNNTTNNTNNNNTNNNNNNTNGNN). A run of 2 helical transmembrane segments spans residues 1567-1587 (VMVIMMPSLYLNNLNVLTLLL) and 1599-1619 (ISSWSSTAFAMFGMVVSIGHF). The TPR repeat unit spans residues 1965 to 1998 (SQLMLAKAEFERINGNFEQAMEYFSEAISLAQQF). Disordered regions lie at residues 2071–2095 (EYSNNNNNNNSNNNNNNANQSQASI) and 2299–2349 (GYNN…NNNK). Over residues 2073–2095 (SNNNNNNNSNNNNNNANQSQASI) the composition is skewed to low complexity. One can recognise a GAF domain in the interval 2215–2465 (YFDRLLKRLM…SNARLFIKVN (251 aa)). Positions 2491–2769 (NMSHEMRTPL…TFHFCVELGK (279 aa)) constitute a Histidine kinase domain. Position 2494 is a phosphohistidine; by autocatalysis (H2494). A compositionally biased stretch (low complexity) spans 2637-2648 (TTTNNKKQLNTD). 5 disordered regions span residues 2637–2673 (TTTNNKKQLNTDNDGDDDDDDDNENLDENNEDTSIDL), 2785–2815 (LLNNNNNNNNNNNNNNNNNNNNNNNNNNNNN), 2917–3030 (LSPK…NNNS), 3134–3160 (NNNINNINNNNNKSNSPIPEDSKHSQY), and 3247–3281 (NSISTTSHSSTSTSSSSSSSSSSSSSLSSTTTITT). Positions 2649 to 2673 (NDGDDDDDDDNENLDENNEDTSIDL) are enriched in acidic residues. Low complexity-rich tracts occupy residues 2787–2815 (NNNNNNNNNNNNNNNNNNNNNNNNNNNNN), 2935–3029 (LSSS…HNNN), and 3134–3145 (NNNINNINNNNN). Residues 3305-3424 (KILIVEDNEM…DLRYVINRYG (120 aa)) enclose the Response regulatory domain. D3356 bears the 4-aspartylphosphate mark.

It belongs to the protein kinase superfamily. Ser/Thr protein kinase family. Post-translationally, activation probably requires transfer of a phosphate group between a histidine in the kinase core (transmitter) domain and an aspartate of the receiver domain.

Its subcellular location is the membrane. It carries out the reaction ATP + protein L-histidine = ADP + protein N-phospho-L-histidine.. The enzyme catalyses L-seryl-[protein] + ATP = O-phospho-L-seryl-[protein] + ADP + H(+). It catalyses the reaction L-threonyl-[protein] + ATP = O-phospho-L-threonyl-[protein] + ADP + H(+). Functionally, acts as a receptor histidine kinase for a signal transduction pathway. This protein undergoes an ATP-dependent autophosphorylation at a conserved histidine residue in the kinase core, and a phosphoryl group is then transferred to a conserved aspartate residue in the receiver domain. In Dictyostelium discoideum (Social amoeba), this protein is Hybrid signal transduction histidine kinase G (dhkG).